Here is a 366-residue protein sequence, read N- to C-terminus: tRNA/tmRNA (uracil-C(5))-methyltransferase (366 aa).

The S-adenosyl-L-methionine site is built by glutamine 190, tyrosine 218, asparagine 223, glutamate 239, and aspartate 299. Cysteine 324 acts as the Nucleophile in catalysis. Glutamate 358 (proton acceptor) is an active-site residue.

This sequence belongs to the class I-like SAM-binding methyltransferase superfamily. RNA M5U methyltransferase family. TrmA subfamily.

The catalysed reaction is uridine(54) in tRNA + S-adenosyl-L-methionine = 5-methyluridine(54) in tRNA + S-adenosyl-L-homocysteine + H(+). The enzyme catalyses uridine(341) in tmRNA + S-adenosyl-L-methionine = 5-methyluridine(341) in tmRNA + S-adenosyl-L-homocysteine + H(+). Its function is as follows. Dual-specificity methyltransferase that catalyzes the formation of 5-methyluridine at position 54 (m5U54) in all tRNAs, and that of position 341 (m5U341) in tmRNA (transfer-mRNA). The protein is tRNA/tmRNA (uracil-C(5))-methyltransferase of Shigella boydii serotype 18 (strain CDC 3083-94 / BS512).